Consider the following 402-residue polypeptide: Speedy protein E5 (402 aa).

A disordered region spans residues 1-89; that stretch reads MDRTETRFRK…EEPEKELAPE (89 aa). Polar residues predominate over residues 16–39; that stretch reads EKITTSRQPQPQNEQSPQRSTSGY. Acidic residues predominate over residues 76–89; it reads DESAEEPEKELAPE.

This sequence belongs to the Speedy/Ringo family.

The sequence is that of Speedy protein E5 (SPDYE5) from Homo sapiens (Human).